The sequence spans 102 residues: Small ribosomal subunit protein uS10 (102 aa).

Belongs to the universal ribosomal protein uS10 family. Part of the 30S ribosomal subunit.

Functionally, involved in the binding of tRNA to the ribosomes. The protein is Small ribosomal subunit protein uS10 of Cenarchaeum symbiosum (strain A).